The sequence spans 405 residues: Glucose-1-phosphate adenylyltransferase 1 (405 aa).

Residues Tyr96, Gly161, 176–177 (EK), and Ser194 contribute to the alpha-D-glucose 1-phosphate site.

It belongs to the bacterial/plant glucose-1-phosphate adenylyltransferase family. In terms of assembly, homotetramer.

It carries out the reaction alpha-D-glucose 1-phosphate + ATP + H(+) = ADP-alpha-D-glucose + diphosphate. It functions in the pathway glycan biosynthesis; glycogen biosynthesis. In terms of biological role, involved in the biosynthesis of ADP-glucose, a building block required for the elongation reactions to produce glycogen. Catalyzes the reaction between ATP and alpha-D-glucose 1-phosphate (G1P) to produce pyrophosphate and ADP-Glc. This chain is Glucose-1-phosphate adenylyltransferase 1, found in Vibrio cholerae serotype O1 (strain ATCC 39315 / El Tor Inaba N16961).